A 245-amino-acid polypeptide reads, in one-letter code: Flavin mononucleotide hydrolase 1, chloroplatic (245 aa).

The N-terminal 26 residues, 1-26, are a transit peptide targeting the chloroplast; sequence MAAAAMHTSAEFINLKPNMWKKNPVR.

It belongs to the HAD-like hydrolase superfamily. DOG/GPP family. As to quaternary structure, homodimer. It depends on Mg(2+) as a cofactor.

Its subcellular location is the plastid. The protein resides in the chloroplast stroma. It carries out the reaction FMN + H2O = riboflavin + phosphate. It catalyses the reaction 5-amino-6-(5-phospho-D-ribitylamino)uracil + H2O = 5-amino-6-(D-ribitylamino)uracil + phosphate. In terms of biological role, FMN hydrolase that catalyzes the dephosphorylation of flavin mononucleotide (FMN) to riboflavin. Can also dephosphorylate 5-amino-6-(5-phospho-D-ribitylamino)uracil, also known as ARPP. Not required for riboflavin biosynthesis in planta, but may help maintaining flavin homeostasis within chloroplasts. The protein is Flavin mononucleotide hydrolase 1, chloroplatic of Arabidopsis thaliana (Mouse-ear cress).